The following is a 1108-amino-acid chain: Eukaryotic translation initiation factor 2-alpha kinase 3 (1108 aa).

A signal peptide spans 1–27 (MERATQPRPRALLLLFLLLGCAAGISA). Topologically, residues 28–506 (VARARSLLAP…HYSKNIRKKD (479 aa)) are lumenal. Residues 71–92 (EALPAASGEQESRATESDDDVE) are disordered. A glycan (N-linked (GlcNAc...) asparagine) is linked at Asn253. Residues 507–527 (PILLLHWWKEIFGTILLCIVA) traverse the membrane as a helical segment. Topologically, residues 528 to 1108 (TTFIVRRLFH…SSTFSPLPGN (581 aa)) are cytoplasmic. Residues 542-563 (RQRKESETQCQTESKYDSVSAD) are disordered. A Protein kinase domain is found at 585–1069 (FEPIQCMGRG…ATDIIENAVF (485 aa)). 591–599 (MGRGGFGVV) is an ATP binding site. Phosphotyrosine; by autocatalysis is present on Tyr611. Lys614 provides a ligand contact to ATP. Positions 639 to 880 (EHPGIVRYFN…SPKVYLYIQM (242 aa)) are insert loop. Ser707 bears the Phosphoserine mark. Disordered regions lie at residues 772–818 (DEGH…RMNR) and 832–856 (FKHSSSRSSSEATLSTSPTRPTTLS). Residues 785–798 (SPYTRSREGTSSSI) are compositionally biased toward polar residues. A Phosphothreonine modification is found at Thr794. Positions 837 to 856 (SRSSSEATLSTSPTRPTTLS) are enriched in low complexity. The active-site Proton acceptor is Asp929. Thr974 is modified (phosphothreonine). Residues 1080-1108 (LRQRSRSLSSSGTKHSRQPSSTFSPLPGN) are disordered. Phosphoserine is present on Ser1086. The segment covering 1097–1108 (QPSSTFSPLPGN) has biased composition (polar residues).

The protein belongs to the protein kinase superfamily. Ser/Thr protein kinase family. GCN2 subfamily. In terms of assembly, forms dimers with HSPA5/BIP in resting cells. Homotetramerizes in response to endoplasmic reticulum (ER) stress, leading to its activation. Interacts with HSP90B1/GRP94. Interacts with DNAJC3; inhibiting EIF2AK3/PERK activity. Interacts with ATAD3A; ATAD3A and EIF2S1/eIF-2-alpha occupy a common binding site within the cytoplasmic loop of EIF2AK3/PERK, leading to prevent EIF2AK3/PERK association with its substrate EIF2S1/eIF-2-alpha. Interacts with MFN2. Interacts with TMEM33. Interacts with PDIA6. Interacts with LACC1. Oligomerization of the N-terminal ER luminal domain by ER stress promotes EIF2AK3/PERK trans-autophosphorylation of the C-terminal cytoplasmic kinase domain at multiple residues including Thr-974 on the kinase activation loop. Autophosphorylated at Tyr-611 following endoplasmic reticulum stress, leading to activate its activity. Dephosphorylated at Tyr-611 by PTPN1/PTP1B, leading to inactivate its enzyme activity. Phosphorylation at Thr-794 by AKT (AKT1, AKT2 and/or AKT3) inactivates EIF2AK3/PERK. Post-translationally, ADP-ribosylated by PARP16 upon ER stress, which increases kinase activity. As to expression, ubiquitous.

It localises to the endoplasmic reticulum membrane. The enzyme catalyses L-seryl-[protein] + ATP = O-phospho-L-seryl-[protein] + ADP + H(+). It catalyses the reaction L-threonyl-[protein] + ATP = O-phospho-L-threonyl-[protein] + ADP + H(+). It carries out the reaction L-tyrosyl-[protein] + ATP = O-phospho-L-tyrosyl-[protein] + ADP + H(+). Inhibited by HSPA5/BIP in absence of stress. Perturbation in protein folding in the endoplasmic reticulum (ER) promotes reversible dissociation from HSPA5/BIP and oligomerization, resulting in trans-autophosphorylation and kinase activity induction. Inactivated following phosphorylation at Thr-794 by AKT (AKT1, AKT2 and/or AKT3). Inhibited by ATAD3A at mitochondria-endoplasmic reticulum contact sites, providing a safe haven for mitochondrial protein translation during ER stress. Functionally, metabolic-stress sensing protein kinase that phosphorylates the alpha subunit of eukaryotic translation initiation factor 2 (EIF2S1/eIF-2-alpha) in response to various stress, such as unfolded protein response (UPR). Key effector of the integrated stress response (ISR) to unfolded proteins: EIF2AK3/PERK specifically recognizes and binds misfolded proteins, leading to its activation and EIF2S1/eIF-2-alpha phosphorylation. EIF2S1/eIF-2-alpha phosphorylation in response to stress converts EIF2S1/eIF-2-alpha in a global protein synthesis inhibitor, leading to a global attenuation of cap-dependent translation, while concomitantly initiating the preferential translation of ISR-specific mRNAs, such as the transcriptional activators ATF4 and QRICH1, and hence allowing ATF4- and QRICH1-mediated reprogramming. The EIF2AK3/PERK-mediated unfolded protein response increases mitochondrial oxidative phosphorylation by promoting ATF4-mediated expression of COX7A2L/SCAF1, thereby increasing formation of respiratory chain supercomplexes. In contrast to most subcellular compartments, mitochondria are protected from the EIF2AK3/PERK-mediated unfolded protein response due to EIF2AK3/PERK inhibition by ATAD3A at mitochondria-endoplasmic reticulum contact sites. In addition to EIF2S1/eIF-2-alpha, also phosphorylates NFE2L2/NRF2 in response to stress, promoting release of NFE2L2/NRF2 from the BCR(KEAP1) complex, leading to nuclear accumulation and activation of NFE2L2/NRF2. Serves as a critical effector of unfolded protein response (UPR)-induced G1 growth arrest due to the loss of cyclin-D1 (CCND1). Involved in control of mitochondrial morphology and function. In Rattus norvegicus (Rat), this protein is Eukaryotic translation initiation factor 2-alpha kinase 3 (Eif2ak3).